A 572-amino-acid chain; its full sequence is Urocanate hydratase (572 aa).

Residues 48–49 (GG), Gln126, 172–174 (GMG), Asp192, 238–239 (NA), 259–263 (QTSAH), 268–269 (YL), and Tyr317 contribute to the NAD(+) site. Cys405 is an active-site residue. Gly487 is an NAD(+) binding site. A compositionally biased stretch (basic and acidic residues) spans 550–559 (EGDEAHEGDA). The interval 550–572 (EGDEAHEGDAAHGSGAAREGDGV) is disordered.

Belongs to the urocanase family. NAD(+) is required as a cofactor.

The protein resides in the cytoplasm. It carries out the reaction 4-imidazolone-5-propanoate = trans-urocanate + H2O. It participates in amino-acid degradation; L-histidine degradation into L-glutamate; N-formimidoyl-L-glutamate from L-histidine: step 2/3. Functionally, catalyzes the conversion of urocanate to 4-imidazolone-5-propionate. In Streptomyces coelicolor (strain ATCC BAA-471 / A3(2) / M145), this protein is Urocanate hydratase.